Here is a 288-residue protein sequence, read N- to C-terminus: ATP synthase subunit a (288 aa).

A run of 6 helical transmembrane segments spans residues 47–67 (LDSM…FWMV), 104–124 (LIAP…LMDL), 157–177 (DPNI…FYSI), 199–219 (PIVQ…TLIA), 237–257 (LIFI…SVPW), and 258–278 (AIFH…LTIV).

Belongs to the ATPase A chain family. As to quaternary structure, F-type ATPases have 2 components, CF(1) - the catalytic core - and CF(0) - the membrane proton channel. CF(1) has five subunits: alpha(3), beta(3), gamma(1), delta(1), epsilon(1). CF(0) has three main subunits: a(1), b(2) and c(9-12). The alpha and beta chains form an alternating ring which encloses part of the gamma chain. CF(1) is attached to CF(0) by a central stalk formed by the gamma and epsilon chains, while a peripheral stalk is formed by the delta and b chains.

It is found in the cell inner membrane. Functionally, key component of the proton channel; it plays a direct role in the translocation of protons across the membrane. This Psychrobacter cryohalolentis (strain ATCC BAA-1226 / DSM 17306 / VKM B-2378 / K5) protein is ATP synthase subunit a.